The chain runs to 374 residues: Serine/threonine-protein kinase-transforming protein mos (374 aa).

The 277-residue stretch at 94-370 (VCLMHRLGSG…LLQRDLKAFR (277 aa)) folds into the Protein kinase domain. ATP is bound by residues 100–108 (LGSGGFGSV) and Lys-121. The active-site Proton acceptor is the Asp-229.

It belongs to the protein kinase superfamily. Ser/Thr protein kinase family.

The catalysed reaction is L-seryl-[protein] + ATP = O-phospho-L-seryl-[protein] + ADP + H(+). It catalyses the reaction L-threonyl-[protein] + ATP = O-phospho-L-threonyl-[protein] + ADP + H(+). The chain is Serine/threonine-protein kinase-transforming protein mos (V-MOS) from Mus musculus (Mouse).